The chain runs to 272 residues: Dermonecrotic toxin SpeSicTox-betaIB2b (272 aa).

Histidine 5 is an active-site residue. Glutamate 25 and aspartate 27 together coordinate Mg(2+). Catalysis depends on histidine 41, which acts as the Nucleophile. 2 cysteine pairs are disulfide-bonded: cysteine 45–cysteine 51 and cysteine 47–cysteine 191. Residue aspartate 85 participates in Mg(2+) binding.

Belongs to the arthropod phospholipase D family. Class II subfamily. It depends on Mg(2+) as a cofactor. Expressed by the venom gland.

Its subcellular location is the secreted. It carries out the reaction an N-(acyl)-sphingosylphosphocholine = an N-(acyl)-sphingosyl-1,3-cyclic phosphate + choline. It catalyses the reaction an N-(acyl)-sphingosylphosphoethanolamine = an N-(acyl)-sphingosyl-1,3-cyclic phosphate + ethanolamine. The enzyme catalyses a 1-acyl-sn-glycero-3-phosphocholine = a 1-acyl-sn-glycero-2,3-cyclic phosphate + choline. The catalysed reaction is a 1-acyl-sn-glycero-3-phosphoethanolamine = a 1-acyl-sn-glycero-2,3-cyclic phosphate + ethanolamine. Dermonecrotic toxins cleave the phosphodiester linkage between the phosphate and headgroup of certain phospholipids (sphingolipid and lysolipid substrates), forming an alcohol (often choline) and a cyclic phosphate. This toxin acts on sphingomyelin (SM). It may also act on ceramide phosphoethanolamine (CPE), lysophosphatidylcholine (LPC) and lysophosphatidylethanolamine (LPE), but not on lysophosphatidylserine (LPS), and lysophosphatidylglycerol (LPG). It acts by transphosphatidylation, releasing exclusively cyclic phosphate products as second products. Induces dermonecrosis, hemolysis, increased vascular permeability, edema, inflammatory response, and platelet aggregation. The chain is Dermonecrotic toxin SpeSicTox-betaIB2b from Sicarius peruensis (Six-eyed sand spider).